Reading from the N-terminus, the 1470-residue chain is Histone acetyltransferase HAC4 (1470 aa).

Residues 1–10 show a composition bias toward polar residues; sequence MNNNKEVPQN. Disordered stretches follow at residues 1–20 and 342–376; these read MNNNKEVPQNSVAVSSSSSA and TNFQSAPNNRDNLPQVSQQLSNHGSRQHRGQHSQN. Residues 11-20 are compositionally biased toward low complexity; it reads SVAVSSSSSA. The segment covering 342–365 has biased composition (polar residues); sequence TNFQSAPNNRDNLPQVSQQLSNHG. The TAZ-type 1 zinc-finger motif lies at 416 to 495; that stretch reads GQTSSNTVLR…SISCRTCVAV (80 aa). Positions 518 to 566 are disordered; sequence SSKCQPKKSSKSRQAYKKGGAEAPSVDADLQRSIKRPKLHRPSQNITPE. A compositionally biased stretch (basic residues) spans 522–533; that stretch reads QPKKSSKSRQAY. Residues 764-841 form a PHD-type zinc finger; sequence HYVCAPCYNE…KYTCPSCYIQ (78 aa). A CBP/p300-type HAT domain is found at 856–1293; the sequence is VPGATSLPVT…ILYHLHNPTA (438 aa). Residues 979-981, 998-999, and tryptophan 1054 contribute to the acetyl-CoA site; these read LDS and RT. ZZ-type zinc fingers lie at residues 1175–1238 and 1295–1347; these read HLQH…IKDV and AFAT…SSTD. Zn(2+) is bound by residues cysteine 1180, cysteine 1183, cysteine 1195, cysteine 1198, cysteine 1204, cysteine 1207, histidine 1220, histidine 1228, cysteine 1300, cysteine 1303, cysteine 1315, cysteine 1318, cysteine 1324, cysteine 1327, histidine 1335, and histidine 1337. Residues 1358-1436 form a TAZ-type 2 zinc finger; it reads SQSYQVKLEK…KCTVPKCSGL (79 aa).

Rosette leaves, stems and flowers.

It localises to the nucleus. The catalysed reaction is L-lysyl-[protein] + acetyl-CoA = N(6)-acetyl-L-lysyl-[protein] + CoA + H(+). In terms of biological role, acetyltransferase enzyme. Acetylates histones, giving a specific tag for transcriptional activation. This Arabidopsis thaliana (Mouse-ear cress) protein is Histone acetyltransferase HAC4 (HAC4).